We begin with the raw amino-acid sequence, 253 residues long: Imidazole glycerol phosphate synthase subunit HisF (253 aa).

Active-site residues include Asp-11 and Asp-130.

It belongs to the HisA/HisF family. In terms of assembly, heterodimer of HisH and HisF.

The protein resides in the cytoplasm. The catalysed reaction is 5-[(5-phospho-1-deoxy-D-ribulos-1-ylimino)methylamino]-1-(5-phospho-beta-D-ribosyl)imidazole-4-carboxamide + L-glutamine = D-erythro-1-(imidazol-4-yl)glycerol 3-phosphate + 5-amino-1-(5-phospho-beta-D-ribosyl)imidazole-4-carboxamide + L-glutamate + H(+). It functions in the pathway amino-acid biosynthesis; L-histidine biosynthesis; L-histidine from 5-phospho-alpha-D-ribose 1-diphosphate: step 5/9. Functionally, IGPS catalyzes the conversion of PRFAR and glutamine to IGP, AICAR and glutamate. The HisF subunit catalyzes the cyclization activity that produces IGP and AICAR from PRFAR using the ammonia provided by the HisH subunit. The sequence is that of Imidazole glycerol phosphate synthase subunit HisF from Ruegeria sp. (strain TM1040) (Silicibacter sp.).